The sequence spans 546 residues: Mercuric reductase (546 aa).

One can recognise an HMA domain in the interval 2–66; the sequence is NKFKVNISGM…AIDEANYQAG (65 aa). 2 residues coordinate a metal cation: C13 and C16. FAD is bound by residues A96, G116, and T121. The cysteines at positions 122 and 127 are disulfide-linked. FAD-binding residues include K131 and A195. NAD(+) contacts are provided by residues 256–263 and G346; that span reads GSGYIGME. 2 residues coordinate FAD: D387 and V395. Residues C543 and C544 each contribute to the Hg(2+) site.

It belongs to the class-I pyridine nucleotide-disulfide oxidoreductase family. In terms of assembly, homodimer. FAD serves as cofactor.

The catalysed reaction is Hg + NADP(+) + H(+) = Hg(2+) + NADPH. With respect to regulation, uses NADPH as the preferred electron donor, but shows slight activity with NADH as well. Inhibited by Cu(2+), Cd(2+), Zn(2+) and Co(2+), with Cu(2+) showing the strongest inhibition. Enzyme activity is enhanced by b-mercaptoethanol and NaCl up to concentrations of 500 uM and 100 mM respectively, followed by inhibition at higher concentrations. Resistance to Hg(2+) in bacteria appears to be governed by a specialized system which includes mercuric reductase. MerA protein is responsible for volatilizing mercury as Hg(0). Catalyzes reduction of Hg(2+) to elemental Hg, which is volatile and can diffuse out of cells passively. Plays a pivotal role in mercury resistance and cell protection. The chain is Mercuric reductase from Lysinibacillus sphaericus (Bacillus sphaericus).